We begin with the raw amino-acid sequence, 452 residues long: Phosphoglucosamine mutase (452 aa).

Ser108 functions as the Phosphoserine intermediate in the catalytic mechanism. Mg(2+) contacts are provided by Ser108, Asp247, Asp249, and Asp251. Ser108 is modified (phosphoserine).

The protein belongs to the phosphohexose mutase family. The cofactor is Mg(2+). In terms of processing, activated by phosphorylation.

The catalysed reaction is alpha-D-glucosamine 1-phosphate = D-glucosamine 6-phosphate. In terms of biological role, catalyzes the conversion of glucosamine-6-phosphate to glucosamine-1-phosphate. The sequence is that of Phosphoglucosamine mutase from Paraburkholderia phytofirmans (strain DSM 17436 / LMG 22146 / PsJN) (Burkholderia phytofirmans).